The following is a 279-amino-acid chain: uncharacterized protein (279 aa).

The interval 1–28 is disordered; sequence MGLFGGGNSKSTSNQTTNNENTNIATQG. Low complexity predominate over residues 9 to 23; that stretch reads SKSTSNQTTNNENTN. A helical membrane pass occupies residues 256–273; the sequence is KTLMIGIVAVSAAVGLYA.

It localises to the host membrane. This is an uncharacterized protein from Pseudoalteromonas espejiana (Bacteriophage PM2).